A 118-amino-acid chain; its full sequence is MKYVTLLLQVGVLYVFSLVGTWIQGVFHLSMPGSLIGMLILFLLLSTRVLPLKWFELGAEKLIVFLPLFLIPSTTGLMEYGSFLFSKESIIFLLVVASTVVTLIVSGYISQLLITTKK.

Helical transmembrane passes span 4 to 26 (VTLL…IQGV), 33 to 52 (GSLI…VLPL), 62 to 84 (LIVF…GSFL), and 91 to 113 (IFLL…SQLL).

The protein belongs to the CidA/LrgA family. CidA subfamily.

Its subcellular location is the cell membrane. In terms of biological role, increases the activity of extracellular murein hydrolases possibly by mediating their export via hole formation. Inhibited by the antiholin-like proteins LrgAB. In an unstressed cell, the LrgAB products probably inhibit the function of the CidA protein. When a cell is stressed by the addition of antibiotics or by other factors in the environment, CidA possibly oligomerizes within the bacterial cell membrane, creating lesions that disrupt the proton motive force, which in turn results in loss of cell viability. These lesions are also hypothesized to regulate the subsequent cell lysis by either allowing the murein hydrolases access to the cell wall substrate and/or regulating their activity by a possible change in the cell wall pH that results from loss of membrane potential. The protein is Holin-like protein CidA 2 (cidA2) of Bacillus cereus (strain ATCC 14579 / DSM 31 / CCUG 7414 / JCM 2152 / NBRC 15305 / NCIMB 9373 / NCTC 2599 / NRRL B-3711).